The chain runs to 463 residues: Glutamate--tRNA ligase 1 (463 aa).

The 'HIGH' region signature appears at 10–20; the sequence is PSPTGYLHIGG. A 'KMSKS' region motif is present at residues 238 to 242; sequence KLSKR. ATP is bound at residue lysine 241.

This sequence belongs to the class-I aminoacyl-tRNA synthetase family. Glutamate--tRNA ligase type 1 subfamily. As to quaternary structure, monomer.

It localises to the cytoplasm. The enzyme catalyses tRNA(Glu) + L-glutamate + ATP = L-glutamyl-tRNA(Glu) + AMP + diphosphate. Its function is as follows. Catalyzes the attachment of glutamate to tRNA(Glu) in a two-step reaction: glutamate is first activated by ATP to form Glu-AMP and then transferred to the acceptor end of tRNA(Glu). The sequence is that of Glutamate--tRNA ligase 1 from Helicobacter pylori (strain HPAG1).